The primary structure comprises 74 residues: Large ribosomal subunit protein bL31 (74 aa).

The Zn(2+) site is built by Cys16, Cys18, Cys38, and Cys41.

This sequence belongs to the bacterial ribosomal protein bL31 family. Type A subfamily. Part of the 50S ribosomal subunit. Zn(2+) is required as a cofactor.

In terms of biological role, binds the 23S rRNA. This Mycobacteroides abscessus (strain ATCC 19977 / DSM 44196 / CCUG 20993 / CIP 104536 / JCM 13569 / NCTC 13031 / TMC 1543 / L948) (Mycobacterium abscessus) protein is Large ribosomal subunit protein bL31.